The primary structure comprises 69 residues: M-poneratoxin-Dq4e (69 aa).

The signal sequence occupies residues 1–25; the sequence is MKLSAFTLAFALILMMAIMYNMAEA. Positions 26–39 are excised as a propeptide; that stretch reads AALADADADAEAIA.

As to expression, expressed by the venom gland.

The protein localises to the secreted. Functionally, may have antimicrobial properties, like most ant linear peptides. In addition, when tested in vitro on the parasite Trypanosoma cruzi (responsible of the Chagas disease), is able to moderately reduce the number of the three forms (epimastigote, trypomastigote and amastigote) by inducing cell death through necrosis. The protein is M-poneratoxin-Dq4e of Dinoponera quadriceps (South American ant).